We begin with the raw amino-acid sequence, 130 residues long: Secreted cysteine-rich effector 2 (130 aa).

The first 23 residues, 1–23 (MLINAARLLLPAAALVHLSLAWA), serve as a signal peptide directing secretion. Residues 68–85 (LKNGEDWCKHCASPRVSV) are plant immunity suppression domain.

It is found in the secreted. Its subcellular location is the host cell. It localises to the host periplasm. In terms of biological role, secreted effector required for full virulence of U.virens. Inhibits host pathogen-associated molecular pattern-triggered immunity including flg22- and chitin-induced defense gene expression and oxidative burst. The sequence is that of Secreted cysteine-rich effector 2 from Ustilaginoidea virens (Rice false smut fungus).